The primary structure comprises 221 residues: MEAGGFLDSLIYGACVVFTLGMFSAGLSDLRHMRMTRSVDNVQFLPFLTTEVNNLGWLSYGALKGDRILIVVNTVGAALQTLYILAYLHYCPRKRVVLLQTATLLGVLLLGYGYFWLLVPNPEARLQLLGLFCSVFTISMYLSPLADLAKVIQTKSTQCLSYPLTIATVLTSASWCLYGFRLRVPYIMVSNFPGIVTSFIRFWLFWKYPQEQDRNYWFLQT.

The next 7 membrane-spanning stretches (helical) occupy residues 3-23 (AGGFLDSLIYGACVVFTLGMF), 42-62 (VQFLPFLTTEVNNLGWLSYGA), 68-88 (ILIVVNTVGAALQTLYILAYL), 96-116 (VVLLQTATLLGVLLLGYGYFW), 126-146 (LQLLGLFCSVFTISMYLSPLA), 160-180 (LSYPLTIATVLTSASWCLYGF), and 186-206 (YIMVSNFPGIVTSFIRFWLFW). The region spanning 10–94 (LIYGACVVFT…LAYLHYCPRK (85 aa)) is the MtN3/slv 1 domain. The region spanning 127–212 (QLLGLFCSVF…WLFWKYPQEQ (86 aa)) is the MtN3/slv 2 domain. The mediates interaction with TRPV2 stretch occupies residues 149–221 (AKVIQTKSTQ…QDRNYWFLQT (73 aa)).

This sequence belongs to the SWEET sugar transporter family. In terms of assembly, interacts with TRPV2; the interaction probably occurs intracellularly and depends on TRPV2 N-glycosylation.

The protein resides in the golgi apparatus membrane. It is found in the cell membrane. Its function is as follows. Mediates sugar transport across membranes. May stimulate V(D)J recombination by the activation of RAG1. This is Sugar transporter SWEET1 (SLC50A1) from Papio anubis (Olive baboon).